The sequence spans 98 residues: uncharacterized protein (98 aa).

The N-terminal stretch at 1 to 23 (MKYVALAFVLSLVILQISAQVGA) is a signal peptide.

As to expression, nacreous layer of shell (at protein level). Expressed primarily in the mantle with highest level in the mantle pallium and lower level in the mantle edge.

Its subcellular location is the secreted. This is an uncharacterized protein from Pinctada maxima (Silver-lipped pearl oyster).